Here is a 368-residue protein sequence, read N- to C-terminus: Abasic site processing protein YMR114C (368 aa).

C2 acts as the Nucleophile in catalysis. C2 carries the thiazolidine linkage to a ring-opened DNA abasic site modification. The disordered stretch occupies residues 25–48 (VNTPKDASSNSQHPHDEEDTKDQP). The span at 37 to 46 (HPHDEEDTKD) shows a compositional bias: basic and acidic residues. The active site involves E132. The interval 270–368 (LENDNEQGID…DSRGKKKIKK (99 aa)) is disordered. Basic and acidic residues-rich tracts occupy residues 281–296 (RGVK…DVFN), 304–313 (NSYDGLKKNE), and 326–349 (IGDR…EKRN). S338 carries the phosphoserine modification.

Belongs to the SOS response-associated peptidase family.

It is found in the chromosome. Its activity is regulated as follows. Formation and reversal of DNA-protein cross-link depends on DNA context. Catalyzes formation of the thiazolidine linkage in presence of abasic sites in single-stranded DNA. Mediates the reversal of the thiazolidine cross-link in presence of double stranded DNA. In terms of biological role, sensor of abasic sites in single-stranded DNA (ssDNA) required to preserve genome integrity by promoting error-free repair of abasic sites. Recognizes and binds abasic sites in ssDNA at replication forks and chemically modifies the lesion by forming a covalent cross-link with DNA: forms a stable thiazolidine linkage between a ring-opened abasic site and the alpha-amino and sulfhydryl substituents of its N-terminal catalytic cysteine residue. The DNA-protein cross-link is then reversed: able to catalyze the reversal of the thiazolidine cross-link and cycle between a cross-link and a non-cross-linked state depending on DNA context: mediates self-reversal of the thiazolidine cross-link in double stranded DNA. Acts as a protease: mediates autocatalytic processing of its N-terminal methionine in order to expose the catalytic cysteine. This Saccharomyces cerevisiae (strain ATCC 204508 / S288c) (Baker's yeast) protein is Abasic site processing protein YMR114C.